The primary structure comprises 140 residues: ATP synthase epsilon chain (140 aa).

This sequence belongs to the ATPase epsilon chain family. In terms of assembly, F-type ATPases have 2 components, CF(1) - the catalytic core - and CF(0) - the membrane proton channel. CF(1) has five subunits: alpha(3), beta(3), gamma(1), delta(1), epsilon(1). CF(0) has three main subunits: a, b and c.

The protein localises to the cell inner membrane. Produces ATP from ADP in the presence of a proton gradient across the membrane. The polypeptide is ATP synthase epsilon chain (Saccharophagus degradans (strain 2-40 / ATCC 43961 / DSM 17024)).